The sequence spans 166 residues: Cyanate hydratase (166 aa).

Active-site residues include Arg92, Glu95, and Ser118.

The protein belongs to the cyanase family.

The enzyme catalyses cyanate + hydrogencarbonate + 3 H(+) = NH4(+) + 2 CO2. Its function is as follows. Catalyzes the reaction of cyanate with bicarbonate to produce ammonia and carbon dioxide. This chain is Cyanate hydratase, found in Zea mays (Maize).